The chain runs to 314 residues: Hydroxyacyl-coenzyme A dehydrogenase, mitochondrial (314 aa).

Residues 1–12 (MAFVTRQFLRSM) constitute a mitochondrion transit peptide. NAD(+) contacts are provided by residues 34–39 (GGGLMG) and aspartate 57. Serine 73 serves as a coordination point for CoA. Residue lysine 75 is modified to N6-acetyllysine. Lysine 80 contacts CoA. At lysine 80 the chain carries N6-succinyllysine. N6-acetyllysine; alternate is present on residues lysine 81 and lysine 87. 2 positions are modified to N6-succinyllysine; alternate: lysine 81 and lysine 87. An NAD(+)-binding site is contributed by glutamate 122. At lysine 125 the chain carries N6-acetyllysine. NAD(+) is bound at residue lysine 127. Lysine 127 is modified (N6-(2-hydroxyisobutyryl)lysine). An N6-acetyllysine; alternate modification is found at lysine 136. Position 136 is an N6-succinyllysine; alternate (lysine 136). Residues serine 149 and asparagine 173 each contribute to the NAD(+) site. Serine 149 contacts CoA. At lysine 179 the chain carries N6-acetyllysine. N6-acetyllysine; alternate occurs at positions 185, 192, and 202. Lysine 185, lysine 192, and lysine 202 each carry N6-succinyllysine; alternate. The residue at position 206 (lysine 206) is an N6-succinyllysine. N6-acetyllysine; alternate occurs at positions 212 and 241. Residues lysine 212 and lysine 241 each carry the N6-succinyllysine; alternate modification. Lysine 305 provides a ligand contact to NAD(+). Residue lysine 312 is modified to N6-acetyllysine; alternate. The residue at position 312 (lysine 312) is an N6-succinyllysine; alternate.

It belongs to the 3-hydroxyacyl-CoA dehydrogenase family. In terms of assembly, homodimer. Interacts with GLUD1; this interaction inhibits the activation of glutamate dehydrogenase 1 (GLUD1). Succinylation at Lys-81, adjacent to a coenzyme A binding site. Desuccinylated by SIRT5. As to expression, expressed in liver, kidney, brain, and pancreatic islets.

Its subcellular location is the mitochondrion matrix. It localises to the nucleus. It is found in the cytoplasm. The protein resides in the cytosol. The enzyme catalyses a (3S)-3-hydroxyacyl-CoA + NAD(+) = a 3-oxoacyl-CoA + NADH + H(+). It carries out the reaction (3S)-3-hydroxybutanoyl-CoA + NAD(+) = acetoacetyl-CoA + NADH + H(+). It catalyses the reaction (3S)-hydroxydecanoyl-CoA + NAD(+) = 3-oxodecanoyl-CoA + NADH + H(+). The catalysed reaction is (3S)-hydroxyhexadecanoyl-CoA + NAD(+) = 3-oxohexadecanoyl-CoA + NADH + H(+). The protein operates within lipid metabolism; fatty acid beta-oxidation. Functionally, mitochondrial fatty acid beta-oxidation enzyme that catalyzes the third step of the beta-oxidation cycle for medium and short-chain 3-hydroxy fatty acyl-CoAs (C4 to C10). Plays a role in the control of insulin secretion by inhibiting the activation of glutamate dehydrogenase 1 (GLUD1), an enzyme that has an important role in regulating amino acid-induced insulin secretion. Plays a role in the maintenance of normal spermatogenesis through the reduction of fatty acid accumulation in the testes. In terms of biological role, inhibits cell proliferation. This Mus musculus (Mouse) protein is Hydroxyacyl-coenzyme A dehydrogenase, mitochondrial (Hadh).